The sequence spans 211 residues: 2,3-bisphosphoglycerate-dependent phosphoglycerate mutase (211 aa).

Substrate contacts are provided by residues 9–16 (RHGQSDWN), 22–23 (TG), R61, 88–91 (ERDY), K99, 115–116 (RR), and 159–160 (GN). The active-site Tele-phosphohistidine intermediate is the H10. E88 functions as the Proton donor/acceptor in the catalytic mechanism.

Belongs to the phosphoglycerate mutase family. BPG-dependent PGAM subfamily. Homodimer.

The catalysed reaction is (2R)-2-phosphoglycerate = (2R)-3-phosphoglycerate. Its pathway is carbohydrate degradation; glycolysis; pyruvate from D-glyceraldehyde 3-phosphate: step 3/5. Functionally, catalyzes the interconversion of 2-phosphoglycerate and 3-phosphoglycerate. This Rhizobium rhizogenes (strain K84 / ATCC BAA-868) (Agrobacterium radiobacter) protein is 2,3-bisphosphoglycerate-dependent phosphoglycerate mutase.